Here is a 1336-residue protein sequence, read N- to C-terminus: Mating factor M secretion protein mam1 (1336 aa).

The segment at 1-29 (MHIHSDLSLPQFEHASIDPPSYSPQKSSF) is disordered. At 1–91 (MHIHSDLSLP…ELAGVSSWSD (91 aa)) the chain is on the cytoplasmic side. A helical transmembrane segment spans residues 92–112 (FFYLFHFSDIPLIFGTLIFTC). In terms of domain architecture, ABC transmembrane type-1 1 spans 104–396 (IFGTLIFTCL…ILPAIPDLIK (293 aa)). Residues 113–153 (LSAALEPLMTWTTGKVFDALSQYATSQITLGKMISLINFNS) are Extracellular-facing. A helical transmembrane segment spans residues 154 to 174 (LLITIFGLASCVFSFGVRFLW). Topologically, residues 175–250 (QYLSAIAGKR…SCLIISFRYS (76 aa)) are cytoplasmic. Residues 251-271 (WSLTLVVLASYPIIILVVGFI) traverse the membrane as a helical segment. Topologically, residues 272 to 778 (NSFLSSAYEK…KSIWKVKKLR (507 aa)) are extracellular. An ABC transporter 1 domain is found at 433–668 (FRFDNVSFAY…EDFENNVSID (236 aa)). 2 N-linked (GlcNAc...) asparagine glycosylation sites follow: Asn-437 and Asn-454. 469 to 476 (GPSGSGKS) is a binding site for ATP. 3 N-linked (GlcNAc...) asparagine glycosylation sites follow: Asn-536, Asn-664, and Asn-697. The chain crosses the membrane as a helical span at residues 779–799 (WFFLLGLLTSLIQGASVPIFA). The ABC transmembrane type-1 2 domain occupies 781-1066 (FLLGLLTSLI…CIMSLPNVSA (286 aa)). The Cytoplasmic portion of the chain corresponds to 800–897 (YVISKCLNLF…ISDMRNMISS (98 aa)). Residues 898–918 (LIEEVFIAFTMAIIGIAWSFA) traverse the membrane as a helical segment. The Extracellular segment spans residues 919–1336 (TGWRLAAVLV…KLIHRGEWIE (418 aa)). Asn-1011, Asn-1063, and Asn-1120 each carry an N-linked (GlcNAc...) asparagine glycan. An ABC transporter 2 domain is found at 1099–1331 (IEFDGVSFAY…HTHFWKLIHR (233 aa)). Residue 1135–1142 (GISGSGKS) participates in ATP binding. 2 N-linked (GlcNAc...) asparagine glycosylation sites follow: Asn-1235 and Asn-1280.

Belongs to the ABC transporter superfamily. Alpha-factor sex pheromone exporter (TC 3.A.1.206) family.

Its subcellular location is the membrane. Functionally, required in S.pombe M (minus) cells for production of M-factor pheromone. Involved in the transport of the farnesyl-derivation of the M-factor pheromone. The chain is Mating factor M secretion protein mam1 (mam1) from Schizosaccharomyces pombe (strain 972 / ATCC 24843) (Fission yeast).